A 142-amino-acid polypeptide reads, in one-letter code: Translation initiation factor 2 subunit beta (142 aa).

It belongs to the eIF-2-beta/eIF-5 family. As to quaternary structure, heterotrimer composed of an alpha, a beta and a gamma chain.

In terms of biological role, eIF-2 functions in the early steps of protein synthesis by forming a ternary complex with GTP and initiator tRNA. This Thermococcus kodakarensis (strain ATCC BAA-918 / JCM 12380 / KOD1) (Pyrococcus kodakaraensis (strain KOD1)) protein is Translation initiation factor 2 subunit beta.